A 794-amino-acid polypeptide reads, in one-letter code: Inactive zinc metalloprotease C354.09c (794 aa).

The disordered stretch occupies residues 1-56; the sequence is MTDEKHVYVPPPKDPPSYEEVALHSALNNSAPPNDGEQNETSMEEMEIIEPPSEDS. The helical transmembrane segment at 91–111 threads the bilayer; it reads IPFQFLYLAVIATVIILASYY.

This sequence belongs to the peptidase M28 family. M28B subfamily.

The protein resides in the membrane. The polypeptide is Inactive zinc metalloprotease C354.09c (Schizosaccharomyces pombe (strain 972 / ATCC 24843) (Fission yeast)).